Reading from the N-terminus, the 420-residue chain is Glycogen synthase kinase-3 beta (420 aa).

The segment covering 1–24 has biased composition (polar residues); sequence MSGRPRTTSFAESCKPVQQPSSFG. The disordered stretch occupies residues 1-50; the sequence is MSGRPRTTSFAESCKPVQQPSSFGSMKVSRDKDGSKVTTVVATPGQGPDR. The region spanning 56 to 340 is the Protein kinase domain; the sequence is YTDTKVIGNG…PLDACAHSFF (285 aa). ATP is bound by residues 62 to 70 and lysine 85; that span reads IGNGSFGVV. The active-site Proton acceptor is the aspartate 181. Positions 384–420 are disordered; it reads NQAAVSTTSNTTSTSDSNTGERGSTNNAASASASNSS. Composition is skewed to low complexity over residues 389–401 and 409–420; these read STTSNTTSTSDSN and NNAASASASNSS.

Belongs to the protein kinase superfamily. CMGC Ser/Thr protein kinase family. GSK-3 subfamily. Phosphorylated. Activated by phosphorylation at Tyr-216.

The protein localises to the cytoplasm. It is found in the nucleus. Its subcellular location is the cell membrane. The enzyme catalyses L-seryl-[tau protein] + ATP = O-phospho-L-seryl-[tau protein] + ADP + H(+). The catalysed reaction is L-threonyl-[tau protein] + ATP = O-phospho-L-threonyl-[tau protein] + ADP + H(+). Plays a role in the organization of the formation of the main body axis of developing embryo. Acts as an inhibitor of differentiation of primary neurons. Inhibits the ability of ectopically expressed NEUROD1 and other bHLH factors to promote early retinal cell differentiation. May participate in the Wnt signaling pathway. May regulate the circadian clock via phosphorylation of the major clock components. This Xenopus laevis (African clawed frog) protein is Glycogen synthase kinase-3 beta (gsk3b).